The sequence spans 692 residues: Putative clathrin assembly protein At1g14910 (692 aa).

An ENTH domain is found at Arg-24–Ile-161. The tract at residues Tyr-325–Gly-383 is disordered. The segment covering Glu-357–Ile-376 has biased composition (polar residues). Phosphoserine is present on Ser-363. The stretch at Phe-532–Ser-548 is repeat 1. Residues Phe-532–Gly-666 are 8 X 17 AA approximate tandem repeats. A 2; truncated repeat occupies Phe-549 to Gly-564. Tandem repeats lie at residues Phe-565–Ala-581, Phe-582–Gly-598, Phe-599–Gly-615, Phe-616–Gly-632, Phe-633–Gly-649, and Leu-650–Gly-666.

As to expression, expressed in the whole plant.

It localises to the membrane. It is found in the clathrin-coated pit. The protein resides in the golgi apparatus. The protein localises to the cytoplasmic vesicle. Its subcellular location is the clathrin-coated vesicle. The protein is Putative clathrin assembly protein At1g14910 of Arabidopsis thaliana (Mouse-ear cress).